The primary structure comprises 347 residues: Phospho-N-acetylmuramoyl-pentapeptide-transferase (347 aa).

The next 10 membrane-spanning stretches (helical) occupy residues 10–30 (SLVFFLLTVFALAFILGIFLG), 67–87 (AGGILFFIVLLLTIFFWLPLG), 91–111 (TWLFAFLIISWSSLGWYDDIV), 127–147 (FVLQLLISAVITTAVMYIYKG), 164–184 (LGHSVLGQVFYFILAVLAIVG), 195–215 (LDGLAAGTTCMCAFGLLVVAV), 220–240 (IPLATDIPVLLTALLGVSLAF), 250–270 (VFMGDTGSLLIGGVLGSCAVM), 275–295 (LLLILLGGVFVAEAGSVILQI), and 325–345 (VVKRFWTAGFFCMVFGIIAAL).

It belongs to the glycosyltransferase 4 family. MraY subfamily. Requires Mg(2+) as cofactor.

It localises to the cell inner membrane. The enzyme catalyses UDP-N-acetyl-alpha-D-muramoyl-L-alanyl-gamma-D-glutamyl-meso-2,6-diaminopimeloyl-D-alanyl-D-alanine + di-trans,octa-cis-undecaprenyl phosphate = di-trans,octa-cis-undecaprenyl diphospho-N-acetyl-alpha-D-muramoyl-L-alanyl-D-glutamyl-meso-2,6-diaminopimeloyl-D-alanyl-D-alanine + UMP. Its pathway is cell wall biogenesis; peptidoglycan biosynthesis. Its function is as follows. Catalyzes the initial step of the lipid cycle reactions in the biosynthesis of the cell wall peptidoglycan: transfers peptidoglycan precursor phospho-MurNAc-pentapeptide from UDP-MurNAc-pentapeptide onto the lipid carrier undecaprenyl phosphate, yielding undecaprenyl-pyrophosphoryl-MurNAc-pentapeptide, known as lipid I. The sequence is that of Phospho-N-acetylmuramoyl-pentapeptide-transferase from Chlamydia abortus (strain DSM 27085 / S26/3) (Chlamydophila abortus).